The chain runs to 144 residues: Maximins 2/H8 type 1 (144 aa).

The signal sequence occupies residues 1-18; it reads MNFKYIVAVSFLIASAYA. The propeptide occupies 19–43; sequence RSEENEIQSLSQRDVLEEESLREMR. Asparagine amide is present on asparagine 70. A propeptide spanning residues 74 to 123 is cleaved from the precursor; it reads TAEEHEVMKRLETVMRDLDSLDYPEEASERETRGFNQEEIANLFTKKEKR. An Isoleucine amide modification is found at isoleucine 143.

The protein belongs to the bombinin family. In terms of tissue distribution, expressed by the skin glands.

It localises to the secreted. Maximin-2 shows antibacterial activity against both Gram-positive and Gram-negative bacteria. It also shows antimicrobial activity against the fungus C.albicans, but not against A.flavus nor P.uticale. It has little hemolytic activity. Functionally, maximin-H8 shows antimicrobial activity against bacteria and against the fungus C.albicans. Shows strong hemolytic activity. This chain is Maximins 2/H8 type 1, found in Bombina maxima (Giant fire-bellied toad).